Consider the following 325-residue polypeptide: Putative gluconeogenesis factor (325 aa).

It belongs to the gluconeogenesis factor family.

Its subcellular location is the cytoplasm. Required for morphogenesis under gluconeogenic growth conditions. The polypeptide is Putative gluconeogenesis factor (Streptococcus pyogenes serotype M1).